Consider the following 187-residue polypeptide: Elongation factor P (187 aa).

It belongs to the elongation factor P family.

The protein localises to the cytoplasm. It participates in protein biosynthesis; polypeptide chain elongation. Involved in peptide bond synthesis. Stimulates efficient translation and peptide-bond synthesis on native or reconstituted 70S ribosomes in vitro. Probably functions indirectly by altering the affinity of the ribosome for aminoacyl-tRNA, thus increasing their reactivity as acceptors for peptidyl transferase. This chain is Elongation factor P, found in Corynebacterium glutamicum (strain R).